We begin with the raw amino-acid sequence, 257 residues long: NAD kinase (257 aa).

Asp-46 acts as the Proton acceptor in catalysis. Residues 46–47, His-51, 116–117, Asp-146, Ala-154, 157–162, and Gln-218 contribute to the NAD(+) site; these read DG, NE, and TAYNLS.

This sequence belongs to the NAD kinase family. A divalent metal cation serves as cofactor.

It localises to the cytoplasm. The catalysed reaction is NAD(+) + ATP = ADP + NADP(+) + H(+). Involved in the regulation of the intracellular balance of NAD and NADP, and is a key enzyme in the biosynthesis of NADP. Catalyzes specifically the phosphorylation on 2'-hydroxyl of the adenosine moiety of NAD to yield NADP. The polypeptide is NAD kinase (Rhizobium meliloti (strain 1021) (Ensifer meliloti)).